The sequence spans 594 residues: Transcription factor TFIIIB component B'' (594 aa).

Residues 1-169 (MSSIVNKSGT…ARRLSTISNK (169 aa)) are disordered. Serine 49 carries the phosphoserine modification. Over residues 150-168 (LDSSSNSNGTARRLSTISN) the composition is skewed to polar residues. Position 178 is a phosphoserine (serine 178). 2 disordered regions span residues 217-245 (SPPT…DENE) and 317-343 (ARQE…KEER). 2 stretches are compositionally biased toward basic and acidic residues: residues 225–241 (SLDR…SREA) and 317–330 (ARQE…LTKE). Positions 415–466 (SYTDPWTVEEMIKFYKALSMWGTDFNLISQLYPYRSRKQVKAKFVNEEKKRP) constitute an SANT domain. The segment covering 520–529 (KNTAKEEDQT) has biased composition (basic and acidic residues). 2 disordered regions span residues 520 to 547 (KNTA…GGIM) and 567 to 594 (LKRK…EIDQ). Positions 579–594 (DNEDNEGSEEEPEIDQ) are enriched in acidic residues.

Belongs to the TFC5 family. In terms of assembly, TFIIIB comprises the TATA-binding protein (TBP), the B-related factor (BRF) and the B'' component (BDP1). Interacts with TFC4.

It is found in the nucleus. General activator of RNA polymerase III transcription. The sequence is that of Transcription factor TFIIIB component B'' (BDP1) from Saccharomyces cerevisiae (strain ATCC 204508 / S288c) (Baker's yeast).